Consider the following 481-residue polypeptide: RAC-alpha serine/threonine-protein kinase (481 aa).

Residues 5-108 (AIVKEGWLHK…WIQVIQHVAD (104 aa)) enclose the PH domain. Residues 120 to 141 (VRSGDSPSDNSGAEEMEVSHSK) form a disordered region. O-linked (GlcNAc) serine glycosylation is found at S127 and S130. The region spanning 151 to 409 (FEYLKLLGKG…AKEIMQHKFF (259 aa)) is the Protein kinase domain. ATP is bound by residues 157-165 (LGKGTFGKV) and K180. D275 serves as the catalytic Proton acceptor. The O-linked (GlcNAc) threonine glycan is linked to T306. T309 is modified (phosphothreonine; by PDPK1). T313 carries O-linked (GlcNAc) threonine glycosylation. The 72-residue stretch at 410–481 (AGIVWQDVYE…QFSYSASGNA (72 aa)) folds into the AGC-kinase C-terminal domain. S474 carries the phosphoserine modification. Residue S474 is glycosylated (O-linked (GlcNAc) serine; alternate). Residue Y475 is modified to Phosphotyrosine.

It belongs to the protein kinase superfamily. AGC Ser/Thr protein kinase family. RAC subfamily. In terms of processing, cleavage by caspase-3/CASP3. Cleaved at the caspase-3 consensus site Asp-463 during apoptosis, resulting in down-regulation of the AKT signaling pathway and decreased cell survival. Post-translationally, phosphorylation on Thr-309 and Ser-474 is required for full activity. Phosphorylation of the activation loop at Thr-309 by PDPK1/PDK1 is a prerequisite for full activation. Phosphorylation by mTORC2 at Ser-474 in response to growth factors plays a key role in AKT1 activation by facilitating subsequent phosphorylation of the activation loop by PDPK1/PDK1. In terms of tissue distribution, expressed in the oocyte.

Its subcellular location is the cytoplasm. It localises to the nucleus. It carries out the reaction L-seryl-[protein] + ATP = O-phospho-L-seryl-[protein] + ADP + H(+). The enzyme catalyses L-threonyl-[protein] + ATP = O-phospho-L-threonyl-[protein] + ADP + H(+). Its activity is regulated as follows. Activated in response to insulin. Three specific sites, one in the kinase domain (Thr-309) and the two other ones in the C-terminal regulatory region (Ser-474 and Tyr-475), need to be phosphorylated for its full activation. In terms of biological role, AKT1 is one of several closely related serine/threonine-protein kinases known as the AKT kinase, and which regulate many processes including metabolism, proliferation, cell survival, growth and angiogenesis. This is mediated through serine and/or threonine phosphorylation of a range of downstream substrates. Over 100 substrate candidates have been reported so far, but for most of them, no isoform specificity has been reported. Signals downstream of phosphatidylinositol 3-kinase (PI(3)K) to mediate the effects of various growth factors such as platelet-derived growth factor (PDGF), epidermal growth factor (EGF), insulin and insulin-like growth factor 1 (IGF1). Plays a role as a key modulator of the AKT-mTOR signaling pathway controlling the tempo of the process of newborn neurons integration during adult neurogenesis, including correct neuron positioning, dendritic development and synapse formation. Plays a role in glucose transport by mediating insulin-induced translocation of the GLUT4 glucose transporter to the cell surface. Mediates the antiapoptotic effects of IGF1. Mediates insulin-stimulated protein synthesis, partly by playing a role in both insulin-induced phosphorylation of 4E-BP1 and in insulin-induced activation of p70 S6 kinase. Promotes glycogen synthesis by mediating the insulin-induced activation of glycogen synthase. Required for insulin-stimulated meiotic reinitiation during oocyte maturation. May be involved in the regulation of vesicular functions such as preciliary trafficking and endocytic recycling. The sequence is that of RAC-alpha serine/threonine-protein kinase from Xenopus laevis (African clawed frog).